The chain runs to 164 residues: Ribosome maturation factor RimP (164 aa).

It belongs to the RimP family.

It is found in the cytoplasm. Functionally, required for maturation of 30S ribosomal subunits. The sequence is that of Ribosome maturation factor RimP from Thermodesulfovibrio yellowstonii (strain ATCC 51303 / DSM 11347 / YP87).